A 101-amino-acid chain; its full sequence is Small ribosomal subunit protein uS14 (101 aa).

The tract at residues 1–20 is disordered; sequence MAKTSQVNRNKRREKMAARD.

It belongs to the universal ribosomal protein uS14 family. As to quaternary structure, part of the 30S ribosomal subunit. Contacts proteins S3 and S10.

Functionally, binds 16S rRNA, required for the assembly of 30S particles and may also be responsible for determining the conformation of the 16S rRNA at the A site. The protein is Small ribosomal subunit protein uS14 of Acidiphilium cryptum (strain JF-5).